A 419-amino-acid chain; its full sequence is Squalene synthase R6 (419 aa).

The chain crosses the membrane as a helical span at residues Thr397 to Ala417.

The protein belongs to the phytoene/squalene synthase family. It depends on Mg(2+) as a cofactor.

Its subcellular location is the membrane. It catalyses the reaction 2 (2E,6E)-farnesyl diphosphate + NADPH + H(+) = squalene + 2 diphosphate + NADP(+). It carries out the reaction 2 (2E,6E)-farnesyl diphosphate + NADH + H(+) = squalene + 2 diphosphate + NAD(+). It participates in terpene metabolism; lanosterol biosynthesis; lanosterol from farnesyl diphosphate: step 1/3. Squalene synthase; part of the gene cluster that mediates the biosynthesis of squalestatin S1 (SQS1, also known as zaragozic acid A), a heavily oxidized fungal polyketide that offers potent cholesterol lowering activity by targeting squalene synthase (SS). Catalyzes the condensation of 2 two farnesyl pyrophosphate moieties to form squalene. The presence of a gene encoding a squalene synthase supports the identification of the cluster as being responsible for SQS1 production and suggests a likely mechanism for self-resistance. This chain is Squalene synthase R6, found in Phoma sp. (strain ATCC 20986 / MF5453).